Consider the following 166-residue polypeptide: Methylmalonyl-CoA epimerase, mitochondrial (166 aa).

Residues 1–23 constitute a mitochondrion transit peptide; it reads MFKQLIKTTLTNSRSFSTNTGSG. The VOC domain maps to 37 to 166; the sequence is KLNHVAIATP…NGVLVELEEK (130 aa). Positions 40, 112, and 162 each coordinate Co(2+).

It belongs to the methylmalonyl-CoA epimerase family.

It localises to the mitochondrion. The enzyme catalyses (R)-methylmalonyl-CoA = (S)-methylmalonyl-CoA. Methylmalonyl-CoA epimerase involved in propionyl-CoA metabolism. This is Methylmalonyl-CoA epimerase, mitochondrial (mcee) from Dictyostelium discoideum (Social amoeba).